Here is a 251-residue protein sequence, read N- to C-terminus: Methylthioribulose-1-phosphate dehydratase (251 aa).

The disordered stretch occupies residues 1–26; sequence MTSVCDATNEDKENGSESTESQDKEH. The span at 9–26 shows a compositional bias: basic and acidic residues; sequence NEDKENGSESTESQDKEH. C100 lines the substrate pocket. Zn(2+) contacts are provided by H118 and H120. E142 (proton donor/acceptor) is an active-site residue. H198 provides a ligand contact to Zn(2+). Positions 232–251 are disordered; it reads MDPSAPPIEENHYYDVQQSQ.

Belongs to the aldolase class II family. MtnB subfamily. Zn(2+) serves as cofactor.

It is found in the cytoplasm. The enzyme catalyses 5-(methylsulfanyl)-D-ribulose 1-phosphate = 5-methylsulfanyl-2,3-dioxopentyl phosphate + H2O. The protein operates within amino-acid biosynthesis; L-methionine biosynthesis via salvage pathway; L-methionine from S-methyl-5-thio-alpha-D-ribose 1-phosphate: step 2/6. In terms of biological role, catalyzes the dehydration of methylthioribulose-1-phosphate (MTRu-1-P) into 2,3-diketo-5-methylthiopentyl-1-phosphate (DK-MTP-1-P). Functions in the methionine salvage pathway. May play a role in apoptosis. The chain is Methylthioribulose-1-phosphate dehydratase from Salmo salar (Atlantic salmon).